We begin with the raw amino-acid sequence, 249 residues long: Triosephosphate isomerase (249 aa).

Residues Asn-12 and Lys-14 each contribute to the substrate site. N6-acetyllysine is present on Lys-14. Tyr-68 carries the post-translational modification 3'-nitrotyrosine. A Phosphoserine modification is found at Ser-80. The active-site Electrophile is the His-96. Position 106 is a phosphoserine (Ser-106). Lys-142 is covalently cross-linked (Glycyl lysine isopeptide (Lys-Gly) (interchain with G-Cter in SUMO1)). Lys-149 carries the post-translational modification N6-succinyllysine. An N6-acetyllysine; alternate modification is found at Lys-156. An N6-succinyllysine; alternate modification is found at Lys-156. The residue at position 159 (Ser-159) is a Phosphoserine. Glu-166 acts as the Proton acceptor in catalysis. Phosphothreonine is present on Thr-173. Position 194 is an N6-acetyllysine; alternate (Lys-194). Lys-194 is subject to N6-succinyllysine; alternate. An N6-methyllysine; alternate modification is found at Lys-194. Position 198 is a phosphoserine (Ser-198). Tyr-209 is modified (3'-nitrotyrosine). Ser-212 bears the Phosphoserine mark. Thr-214 bears the Phosphothreonine mark. Ser-223 is subject to Phosphoserine. N6-acetyllysine is present on Lys-238.

Belongs to the triosephosphate isomerase family. In terms of assembly, homodimer.

The protein resides in the cytoplasm. The enzyme catalyses dihydroxyacetone phosphate = methylglyoxal + phosphate. It carries out the reaction D-glyceraldehyde 3-phosphate = dihydroxyacetone phosphate. It participates in carbohydrate degradation; glycolysis; D-glyceraldehyde 3-phosphate from glycerone phosphate: step 1/1. It functions in the pathway carbohydrate biosynthesis; gluconeogenesis. In terms of biological role, triosephosphate isomerase is an extremely efficient metabolic enzyme that catalyzes the interconversion between dihydroxyacetone phosphate (DHAP) and D-glyceraldehyde-3-phosphate (G3P) in glycolysis and gluconeogenesis. Functionally, it is also responsible for the non-negligible production of methylglyoxal a reactive cytotoxic side-product that modifies and can alter proteins, DNA and lipids. The sequence is that of Triosephosphate isomerase (TPI1) from Macaca fascicularis (Crab-eating macaque).